The following is a 256-amino-acid chain: Pimeloyl-[acyl-carrier protein] methyl ester esterase (256 aa).

An AB hydrolase-1 domain is found at 16-240; it reads LVILHGWGVN…PKASHAPFLS (225 aa). Substrate-binding positions include W22, 80 to 81, and 143 to 147; these read SL and FLAIQ. The active-site Nucleophile is the S80. Residues D207 and H235 contribute to the active site. H235 contributes to the substrate binding site.

It belongs to the AB hydrolase superfamily. Carboxylesterase BioH family. As to quaternary structure, monomer.

Its subcellular location is the cytoplasm. The catalysed reaction is 6-carboxyhexanoyl-[ACP] methyl ester + H2O = 6-carboxyhexanoyl-[ACP] + methanol + H(+). Its pathway is cofactor biosynthesis; biotin biosynthesis. Functionally, the physiological role of BioH is to remove the methyl group introduced by BioC when the pimeloyl moiety is complete. It allows to synthesize pimeloyl-ACP via the fatty acid synthetic pathway through the hydrolysis of the ester bonds of pimeloyl-ACP esters. This Shewanella woodyi (strain ATCC 51908 / MS32) protein is Pimeloyl-[acyl-carrier protein] methyl ester esterase.